Here is a 261-residue protein sequence, read N- to C-terminus: 3-hydroxyacyl-CoA dehydrogenase type-2 (261 aa).

N-acetylalanine is present on A2. Residues S20, L22, and D41 each coordinate NAD(+). K53 is subject to N6-acetyllysine; alternate. K53 is modified (N6-succinyllysine; alternate). V65 contacts NAD(+). Residue K69 is modified to N6-acetyllysine. C91 provides a ligand contact to NAD(+). N6-acetyllysine occurs at positions 99 and 105. S155 provides a ligand contact to substrate. NAD(+) is bound by residues Y168, K172, F201, and T203. Catalysis depends on Y168, which acts as the Proton acceptor. K212 carries the N6-acetyllysine; alternate modification. K212 bears the N6-succinyllysine; alternate mark.

The protein belongs to the short-chain dehydrogenases/reductases (SDR) family. Homotetramer. Component of mitochondrial ribonuclease P, a complex composed of TRMT10C/MRPP1, HSD17B10/MRPP2 and PRORP/MRPP3. Interacts with TRMT10C/MRPP1; forming the MRPP1-MRPP2 subcomplex of the mitochondrial ribonuclease P complex.

It is found in the mitochondrion. Its subcellular location is the mitochondrion matrix. The protein resides in the mitochondrion nucleoid. The catalysed reaction is a (3S)-3-hydroxyacyl-CoA + NAD(+) = a 3-oxoacyl-CoA + NADH + H(+). It catalyses the reaction (2S,3S)-3-hydroxy-2-methylbutanoyl-CoA + NAD(+) = 2-methyl-3-oxobutanoyl-CoA + NADH + H(+). The enzyme catalyses testosterone + NAD(+) = androst-4-ene-3,17-dione + NADH + H(+). It carries out the reaction 5alpha-androstane-3alpha,17beta-diol + NAD(+) = 17beta-hydroxy-5alpha-androstan-3-one + NADH + H(+). The catalysed reaction is 17beta-estradiol + NAD(+) = estrone + NADH + H(+). It catalyses the reaction cholate + NAD(+) = 3alpha,12alpha-dihydroxy-7-oxo-5beta-cholanate + NADH + H(+). The enzyme catalyses (3S)-3-hydroxybutanoyl-CoA + NAD(+) = acetoacetyl-CoA + NADH + H(+). It carries out the reaction (3S)-hydroxyoctanoyl-CoA + NAD(+) = 3-oxooctanoyl-CoA + NADH + H(+). The catalysed reaction is (3S)-hydroxyhexadecanoyl-CoA + NAD(+) = 3-oxohexadecanoyl-CoA + NADH + H(+). It catalyses the reaction 17beta-hydroxy-5alpha-androstan-3-one + NAD(+) = 5alpha-androstan-3,17-dione + NADH + H(+). The enzyme catalyses 5alpha-pregnan-20beta-ol-3-one + NAD(+) = 5alpha-pregnane-3,20-dione + NADH + H(+). It carries out the reaction 3alpha-hydroxy-5alpha-pregnan-20-one + NAD(+) = 5alpha-pregnane-3,20-dione + NADH + H(+). The catalysed reaction is cortisone + NAD(+) = 17alpha-hydroxypregn-4-en-3,11,20-trione-21-al + NADH + H(+). It catalyses the reaction 11-dehydrocorticosterone + NAD(+) = pregn-4-ene-3,11,20,21-tetraone + NADH + H(+). The enzyme catalyses cortisol + NAD(+) = 11beta,17alpha-dihydroxypregn-4-ene-3,20,21-trione + NADH + H(+). It carries out the reaction chenodeoxycholate + NAD(+) = 7-oxolithocholate + NADH + H(+). The catalysed reaction is ursodeoxycholate + NAD(+) = 7-oxolithocholate + NADH + H(+). It catalyses the reaction 3beta,7beta-dihydroxy-5beta-cholan-24-oate + NAD(+) = 3beta-hydroxy-7-oxo-5beta-cholan-24-oate + NADH + H(+). It functions in the pathway amino-acid degradation; L-isoleucine degradation. It participates in lipid metabolism; fatty acid beta-oxidation. Its pathway is steroid metabolism. The protein operates within lipid metabolism; bile acid biosynthesis. Its function is as follows. Mitochondrial dehydrogenase involved in pathways of fatty acid, branched-chain amino acid and steroid metabolism. Acts as (S)-3-hydroxyacyl-CoA dehydrogenase in mitochondrial fatty acid beta-oxidation, a major degradation pathway of fatty acids. Catalyzes the third step in the beta-oxidation cycle, namely the reversible conversion of (S)-3-hydroxyacyl-CoA to 3-ketoacyl-CoA. Preferentially accepts straight medium- and short-chain acyl-CoA substrates with highest efficiency for (3S)-hydroxybutanoyl-CoA. Acts as 3-hydroxy-2-methylbutyryl-CoA dehydrogenase in branched-chain amino acid catabolic pathway. Catalyzes the oxidation of 3-hydroxy-2-methylbutanoyl-CoA into 2-methyl-3-oxobutanoyl-CoA, a step in isoleucine degradation pathway. Has hydroxysteroid dehydrogenase activity toward steroid hormones and bile acids. Catalyzes the oxidation of 3alpha-, 17beta-, 20beta- and 21-hydroxysteroids and 7alpha- and 7beta-hydroxy bile acids. Oxidizes allopregnanolone/brexanolone at the 3alpha-hydroxyl group, which is known to be critical for the activation of gamma-aminobutyric acid receptors (GABAARs) chloride channel. Has phospholipase C-like activity toward cardiolipin and its oxidized species. Likely oxidizes the 2'-hydroxyl in the head group of cardiolipin to form a ketone intermediate that undergoes nucleophilic attack by water and fragments into diacylglycerol, dihydroxyacetone and orthophosphate. Has higher affinity for cardiolipin with oxidized fatty acids and may degrade these species during the oxidative stress response to protect cells from apoptosis. By interacting with intracellular amyloid-beta, it may contribute to the neuronal dysfunction associated with Alzheimer disease (AD). Essential for structural and functional integrity of mitochondria. Functionally, in addition to mitochondrial dehydrogenase activity, moonlights as a component of mitochondrial ribonuclease P, a complex that cleaves tRNA molecules in their 5'-ends. Together with TRMT10C/MRPP1, forms a subcomplex of the mitochondrial ribonuclease P, named MRPP1-MRPP2 subcomplex, which displays functions that are independent of the ribonuclease P activity. The MRPP1-MRPP2 subcomplex catalyzes the formation of N(1)-methylguanine and N(1)-methyladenine at position 9 (m1G9 and m1A9, respectively) in tRNAs; HSD17B10/MRPP2 acting as a non-catalytic subunit. The MRPP1-MRPP2 subcomplex also acts as a tRNA maturation platform: following 5'-end cleavage by the mitochondrial ribonuclease P complex, the MRPP1-MRPP2 subcomplex enhances the efficiency of 3'-processing catalyzed by ELAC2, retains the tRNA product after ELAC2 processing and presents the nascent tRNA to the mitochondrial CCA tRNA nucleotidyltransferase TRNT1 enzyme. Associates with mitochondrial DNA complexes at the nucleoids to initiate RNA processing and ribosome assembly. The chain is 3-hydroxyacyl-CoA dehydrogenase type-2 (Hsd17b10) from Rattus norvegicus (Rat).